Consider the following 30-residue polypeptide: U1-poneritoxin-Ni3d (30 aa).

The protein belongs to the ponericin-G family. As to expression, expressed by the venom gland.

It is found in the secreted. Has activity against some Gram-positive bacteria and S.cerevisiae. Has a non-hemolytic activity. This is U1-poneritoxin-Ni3d from Neoponera inversa (Ant).